The sequence spans 234 residues: MVELRVNAGNVKNPNVHKIGIIALGSHLENHGPALPIDTDAKIASHIAFQASLESGAKFLGVIYPAHELKEINHGIHVSLEDLTDEIVKVLKSAKKFLRISSVIIVNGHGGNLPIVTTLYDIEERTGLLITLNSKIIESEGPHGGSGELSMAKALGIIDESQVENQTNLEEYGEVGLYMFGEARRNDPNIEEGALDVEENGVYVDDVYGQELLKLAINSVLLDVEKQLDSHYGY.

Glutamate 29, histidine 31, aspartate 40, and histidine 109 together coordinate Fe cation.

This sequence belongs to the creatininase superfamily. FAPy deformylase family. As to quaternary structure, homodimer. Requires Fe(2+) as cofactor. The cofactor is Zn(2+).

The enzyme catalyses 2-amino-5-formylamino-6-(5-phospho-D-ribosylamino)pyrimidin-4(3H)-one + H2O = 2,5-diamino-6-(1-D-ribosylamino)pyrimidin-4(3H)-one 5'-phosphate + formate + H(+). Its pathway is cofactor biosynthesis; coenzyme F420 biosynthesis. It participates in cofactor biosynthesis; riboflavin biosynthesis. In terms of biological role, catalyzes the hydrolysis of the formamide of 2-amino-5-formylamino-6-ribosylamino-4(3H)-pyrimidinone 5'-monophosphate (FAPy) to form 2,5-diamino-6-ribosylamino-4(3H)-pyrimidinone 5'-phosphate (APy). This chain is 2-amino-5-formylamino-6-ribosylaminopyrimidin-4(3H)-one 5'-monophosphate deformylase, found in Methanobrevibacter ruminantium (strain ATCC 35063 / DSM 1093 / JCM 13430 / OCM 146 / M1) (Methanobacterium ruminantium).